The chain runs to 244 residues: Protein-lysine methyltransferase METTL21E (244 aa).

A disordered region spans residues 1–20 (MDLTVTHITHKETYKEPRDD). A compositionally biased stretch (basic and acidic residues) spans 9-18 (THKETYKEPR). S-adenosyl-L-methionine-binding positions include tryptophan 69, 97–99 (GAG), aspartate 118, tryptophan 149, and alanine 170.

It belongs to the methyltransferase superfamily. METTL21 family.

Protein-lysine methyltransferase. This chain is Protein-lysine methyltransferase METTL21E (Mettl21e), found in Mus musculus (Mouse).